Reading from the N-terminus, the 465-residue chain is tRNA modification GTPase MnmE (465 aa).

Residues R21, E85, and K124 each contribute to the (6S)-5-formyl-5,6,7,8-tetrahydrofolate site. One can recognise a TrmE-type G domain in the interval G220–H387. Residue N230 coordinates K(+). Residues N230–T235, S249–T255, and D274–G277 contribute to the GTP site. S234 is a binding site for Mg(2+). K(+) contacts are provided by S249, I251, and T254. Position 255 (T255) interacts with Mg(2+). K465 serves as a coordination point for (6S)-5-formyl-5,6,7,8-tetrahydrofolate.

It belongs to the TRAFAC class TrmE-Era-EngA-EngB-Septin-like GTPase superfamily. TrmE GTPase family. Homodimer. Heterotetramer of two MnmE and two MnmG subunits. The cofactor is K(+).

It localises to the cytoplasm. Functionally, exhibits a very high intrinsic GTPase hydrolysis rate. Involved in the addition of a carboxymethylaminomethyl (cmnm) group at the wobble position (U34) of certain tRNAs, forming tRNA-cmnm(5)s(2)U34. This Bacteroides fragilis (strain ATCC 25285 / DSM 2151 / CCUG 4856 / JCM 11019 / LMG 10263 / NCTC 9343 / Onslow / VPI 2553 / EN-2) protein is tRNA modification GTPase MnmE.